A 77-amino-acid chain; its full sequence is Translation initiation factor IF-1, chloroplastic (77 aa).

Residues 1–71 enclose the S1-like domain; it reads MKEQKLIHEG…TRGRIIYRLR (71 aa).

It belongs to the IF-1 family. Component of the 30S ribosomal translation pre-initiation complex which assembles on the 30S ribosome in the order IF-2 and IF-3, IF-1 and N-formylmethionyl-tRNA(fMet); mRNA recruitment can occur at any time during PIC assembly.

It localises to the plastid. Its subcellular location is the chloroplast. One of the essential components for the initiation of protein synthesis. Stabilizes the binding of IF-2 and IF-3 on the 30S subunit to which N-formylmethionyl-tRNA(fMet) subsequently binds. Helps modulate mRNA selection, yielding the 30S pre-initiation complex (PIC). Upon addition of the 50S ribosomal subunit IF-1, IF-2 and IF-3 are released leaving the mature 70S translation initiation complex. In Calycanthus floridus var. glaucus (Eastern sweetshrub), this protein is Translation initiation factor IF-1, chloroplastic.